The following is a 246-amino-acid chain: Envelope glycoprotein L (246 aa).

The N-terminal stretch at 1-19 (MKTNIFFIFLISILNQIYA) is a signal peptide. The gL betaherpesvirus-type domain occupies 29–235 (LEQECIKNIL…EKYNEVLPFR (207 aa)). The cysteines at positions 134 and 139 are disulfide-linked.

The protein belongs to the herpesviridae glycoprotein L (gL) family. Betaherpesvirinae gL subfamily. Interacts with glycoprotein H (gH); this interaction is necessary for the correct processing and cell surface expression of gH.

It localises to the virion membrane. It is found in the host cell membrane. The protein resides in the host Golgi apparatus. The protein localises to the host trans-Golgi network. In terms of biological role, the heterodimer glycoprotein H-glycoprotein L is required for the fusion of viral and plasma membranes leading to virus entry into the host cell. Acts as a functional inhibitor of gH and maintains gH in an inhibited form. Upon binding to host integrins, gL dissociates from gH leading to activation of the viral fusion glycoproteins gB and gH. The sequence is that of Envelope glycoprotein L from Homo sapiens (Human).